Reading from the N-terminus, the 197-residue chain is Peptidyl-tRNA hydrolase (197 aa).

Residue tyrosine 23 coordinates tRNA. Residue histidine 28 is the Proton acceptor of the active site. TRNA-binding residues include phenylalanine 73, asparagine 75, and asparagine 121.

The protein belongs to the PTH family. As to quaternary structure, monomer.

It is found in the cytoplasm. It catalyses the reaction an N-acyl-L-alpha-aminoacyl-tRNA + H2O = an N-acyl-L-amino acid + a tRNA + H(+). Functionally, hydrolyzes ribosome-free peptidyl-tRNAs (with 1 or more amino acids incorporated), which drop off the ribosome during protein synthesis, or as a result of ribosome stalling. Catalyzes the release of premature peptidyl moieties from peptidyl-tRNA molecules trapped in stalled 50S ribosomal subunits, and thus maintains levels of free tRNAs and 50S ribosomes. The protein is Peptidyl-tRNA hydrolase of Frankia alni (strain DSM 45986 / CECT 9034 / ACN14a).